A 373-amino-acid chain; its full sequence is Arfaptin-1 (373 aa).

The interval 1 to 47 is disordered; sequence MAQESPKNSAAEIPVTSNGEVDDAHEHGYNRDLKHSLPSGLGLSETQ. Ala2 is subject to N-acetylalanine. Ser5 carries the post-translational modification Phosphoserine. The segment covering 22–35 has biased composition (basic and acidic residues); that stretch reads DDAHEHGYNRDLKH. Phosphoserine is present on residues Ser36, Ser39, Ser69, Ser79, and Ser132. The region spanning 153–353 is the AH domain; sequence TVDLELEAQI…NQKQLELTLK (201 aa). A Phosphothreonine modification is found at Thr361.

As to quaternary structure, forms homodimers or heterodimers with ARFIP2. Interacts with non-myristoylated GTP-bound ARF3, but not to GDP-bound ARF3. Interacts with ARF1. Binds with lower affinity to ARF5 and with very little affinity to ARF6. Interacts with ARL1. Interacts with ATG9A. In terms of processing, phosphorylated by PRKD1; phosphorylation delocalizes ARFIP1 from the Golgi and disrupts its ability to inhibit the activity of ADP-ribosylation factor, an important component of the vesicle scission machinery.

The protein localises to the golgi apparatus. It is found in the trans-Golgi network membrane. In terms of biological role, plays a role in controlling biogenesis of secretory granules at the trans-Golgi network. Mechanistically, binds ARF-GTP at the neck of a growing secretory granule precursor and forms a protective scaffold. Once the granule precursor has been completely loaded, active PRKD1 phosphorylates ARFIP1 and releases it from ARFs. In turn, ARFs induce fission. Through this mechanism, ensures proper secretory granule formation at the Golgi of pancreatic beta cells. This chain is Arfaptin-1, found in Mus musculus (Mouse).